A 324-amino-acid chain; its full sequence is D-alanine--D-alanine ligase (324 aa).

An ATP-grasp domain is found at 120 to 322; that stretch reads NNYLRGFGVE…LKEILTEIIE (203 aa). 149-204 contributes to the ATP binding site; sequence IDKLGLPLIVKPNDGGSSFGVTKVTNITQIQLAIRNAFNEGEGVLIESFIPGTEIT. Mg(2+) is bound by residues Asp276, Glu289, and Asn291.

This sequence belongs to the D-alanine--D-alanine ligase family. Mg(2+) is required as a cofactor. The cofactor is Mn(2+).

Its subcellular location is the cytoplasm. The catalysed reaction is 2 D-alanine + ATP = D-alanyl-D-alanine + ADP + phosphate + H(+). Its pathway is cell wall biogenesis; peptidoglycan biosynthesis. In terms of biological role, cell wall formation. The protein is D-alanine--D-alanine ligase of Azobacteroides pseudotrichonymphae genomovar. CFP2.